The primary structure comprises 233 residues: MADS-box transcription factor 20 (233 aa).

One can recognise an MADS-box domain in the interval 1–61; sequence MGRGKVQVRR…GNLFHYASSH (61 aa). Positions 91–184 constitute a K-box domain; the sequence is EGSMSYDHIK…PTKAAAPPAC (94 aa).

As to expression, expressed in developing seeds and seedling shoots.

It is found in the nucleus. In terms of biological role, probable transcription factor. The sequence is that of MADS-box transcription factor 20 (MADS20) from Oryza sativa subsp. japonica (Rice).